A 199-amino-acid chain; its full sequence is Thymidine kinase (199 aa).

ATP contacts are provided by residues 23-30 (GSMFSGKT) and 95-98 (DEAQ). The Proton acceptor role is filled by E96. Residues C152, C155, C184, and C187 each contribute to the Zn(2+) site.

It belongs to the thymidine kinase family. In terms of assembly, homotetramer.

It is found in the cytoplasm. The catalysed reaction is thymidine + ATP = dTMP + ADP + H(+). The polypeptide is Thymidine kinase (Bacteroides fragilis (strain ATCC 25285 / DSM 2151 / CCUG 4856 / JCM 11019 / LMG 10263 / NCTC 9343 / Onslow / VPI 2553 / EN-2)).